The primary structure comprises 388 residues: Formate-dependent phosphoribosylglycinamide formyltransferase (388 aa).

Residues 11 to 12 (EL) and glutamate 71 each bind N(1)-(5-phospho-beta-D-ribosyl)glycinamide. Residues arginine 103, lysine 144, 149-154 (SSGKGQ), 184-187 (EEFI), and glutamate 192 each bind ATP. The region spanning 108 to 300 (DLAAKELGLK…EFELHLRAVL (193 aa)) is the ATP-grasp domain. Positions 257 and 270 each coordinate Mg(2+). Residues aspartate 277, lysine 349, and 356–357 (RR) each bind N(1)-(5-phospho-beta-D-ribosyl)glycinamide.

Belongs to the PurK/PurT family. In terms of assembly, homodimer.

It catalyses the reaction N(1)-(5-phospho-beta-D-ribosyl)glycinamide + formate + ATP = N(2)-formyl-N(1)-(5-phospho-beta-D-ribosyl)glycinamide + ADP + phosphate + H(+). Its pathway is purine metabolism; IMP biosynthesis via de novo pathway; N(2)-formyl-N(1)-(5-phospho-D-ribosyl)glycinamide from N(1)-(5-phospho-D-ribosyl)glycinamide (formate route): step 1/1. Its function is as follows. Involved in the de novo purine biosynthesis. Catalyzes the transfer of formate to 5-phospho-ribosyl-glycinamide (GAR), producing 5-phospho-ribosyl-N-formylglycinamide (FGAR). Formate is provided by PurU via hydrolysis of 10-formyl-tetrahydrofolate. The sequence is that of Formate-dependent phosphoribosylglycinamide formyltransferase from Bacteroides thetaiotaomicron (strain ATCC 29148 / DSM 2079 / JCM 5827 / CCUG 10774 / NCTC 10582 / VPI-5482 / E50).